The chain runs to 379 residues: Protein RecA (379 aa).

The disordered stretch occupies residues 1–23 (MSVDVKSAQSSKSDSLQVEPRPG). The span at 7–16 (SAQSSKSDSL) shows a compositional bias: polar residues. 84–91 (GPESSGKT) serves as a coordination point for ATP.

The protein belongs to the RecA family.

It is found in the cytoplasm. Its function is as follows. Can catalyze the hydrolysis of ATP in the presence of single-stranded DNA, the ATP-dependent uptake of single-stranded DNA by duplex DNA, and the ATP-dependent hybridization of homologous single-stranded DNAs. It interacts with LexA causing its activation and leading to its autocatalytic cleavage. The sequence is that of Protein RecA from Prochlorococcus marinus (strain MIT 9313).